The following is a 56-amino-acid chain: Large ribosomal subunit protein bL32 (56 aa).

Residues 1–21 (MAVQQNRKTRSRRGMRRSHDA) form a disordered region. The span at 7 to 16 (RKTRSRRGMR) shows a compositional bias: basic residues.

Belongs to the bacterial ribosomal protein bL32 family.

This Vibrio cholerae serotype O1 (strain ATCC 39541 / Classical Ogawa 395 / O395) protein is Large ribosomal subunit protein bL32.